The primary structure comprises 328 residues: Neuropeptides B/W receptor type 1 (328 aa).

Over 1–37 the chain is Extracellular; it reads MDNASFSEPWPANASGPDPALSCSNASTLAPLPAPLA. N-linked (GlcNAc...) asparagine glycans are attached at residues asparagine 3, asparagine 13, and asparagine 25. Residues 38–61 form a helical membrane-spanning segment; sequence VAVPVVYAVICAVGLAGNSAVLYV. The Cytoplasmic segment spans residues 62-72; that stretch reads LLRAPRMKTVT. Residues 73 to 97 traverse the membrane as a helical segment; it reads NLFILNLAIADELFTLVLPINIADF. Topologically, residues 98 to 112 are extracellular; that stretch reads LLRQWPFGELMCKLI. Cysteine 109 and cysteine 188 are joined by a disulfide. Residues 113 to 132 traverse the membrane as a helical segment; sequence VAIDQYNTFSSLYFLTVMSA. At 133–157 the chain is on the cytoplasmic side; it reads DRYLVVLATAESRRVAGRTYSAARA. The chain crosses the membrane as a helical span at residues 158–177; that stretch reads VSLAVWGIVTLVVLPFAVFA. The Extracellular segment spans residues 178–202; it reads RLDDEQGRRQCVLVFPQPEAFWWRA. A helical membrane pass occupies residues 203–224; that stretch reads SRLYTLVLGFAIPVSTICVLYT. Residues 225–248 lie on the Cytoplasmic side of the membrane; that stretch reads TLLCRLHAMRLDSHAKALERAKKR. Residues 249–273 traverse the membrane as a helical segment; that stretch reads VTFLVVAILAVCLLCWTPYHLSTVV. Residues 274 to 283 lie on the Extracellular side of the membrane; it reads ALTTDLPQTP. The chain crosses the membrane as a helical span at residues 284 to 298; that stretch reads LVIAISYFITSLSYA. Topologically, residues 299-328 are cytoplasmic; sequence NSCLNPFLYAFLDASFRRNLRQLITCRAAA.

The protein belongs to the G-protein coupled receptor 1 family. Found in cerebellum and frontal cortex. Detected at high levels in hippocampus, amygdala and trachea; at moderate levels in fetal brain, pituitary gland and prostate. Not in caudate, accumbens, kidney or liver. Also detected at high levels in lung carcinoma.

It is found in the cell membrane. Functionally, interacts specifically with a number of opioid ligands. Receptor for neuropeptides B and W, which may be involved in neuroendocrine system regulation, food intake and the organization of other signals. Has a higher affinity for neuropeptide B. The sequence is that of Neuropeptides B/W receptor type 1 (NPBWR1) from Homo sapiens (Human).